Here is a 407-residue protein sequence, read N- to C-terminus: Pleckstrin homology-like domain family A member 1 (407 aa).

Composition is skewed to basic and acidic residues over residues 1–11 (MRRTPAAERLS) and 54–63 (RSAEDGREQP). Residues 1–67 (MRRTPAAERL…DGREQPAHGS (67 aa)) are disordered. The region spanning 149 to 184 (SGCKALKEGVLEKRSDGLLQLWKKKCCILTEEGLLL) is the PH domain. 2 disordered regions span residues 188–224 (KQVQ…EPPA) and 296–407 (QQHL…SNSA). 2 stretches are compositionally biased toward low complexity: residues 189-204 (QVQH…QPGQ) and 297-319 (QHLV…QPQI). The tract at residues 312–348 (PQPQQPQIQPQPQPQIQPQPQPQPQPQPQPQQQPQPQ) is 15 X 2 AA repeats of P-Q. The segment covering 320–344 (QPQPQPQIQPQPQPQPQPQPQPQQQ) has biased composition (pro residues). The tract at residues 354–381 (PHPHPHLYPHPHPHAHSHPHPHPHPHPH) is 11 X 2 AA repeats of P-H. Residues 354–384 (PHPHPHLYPHPHPHAHSHPHPHPHPHPHQLQ) show a composition bias toward basic residues. Over residues 385–395 (HAHQPLHSQPQ) the composition is skewed to low complexity.

As to quaternary structure, interacts with RPL14, EIF3S7 and PABPC4.

It localises to the cytoplasm. The protein localises to the cytoplasmic vesicle. The protein resides in the nucleus. It is found in the nucleolus. Seems to be involved in regulation of apoptosis. May be involved in detachment-mediated programmed cell death. May mediate apoptosis during neuronal development. May be involved in regulation of anti-apoptotic effects of IGF1. May be involved in translational regulation. In Rattus norvegicus (Rat), this protein is Pleckstrin homology-like domain family A member 1 (Phlda1).